Reading from the N-terminus, the 614-residue chain is Probable pectinesterase/pectinesterase inhibitor 13 (614 aa).

Residues 25–45 (IIVGTVSLLVVVAAIVGGAFA) traverse the membrane as a helical segment. The interval 55 to 102 (QQQQQQQAKNHNKSGSGNNVVKDSDKKSPSPPTPSQKAPVSAAQSVKP) is disordered. N-linked (GlcNAc...) asparagine glycosylation is found at Asn66, Asn128, Asn197, Asn243, Asn301, Asn351, and Asn367. The tract at residues 103–255 (GQGDKIIQTL…QVLTSNSLAL (153 aa)) is pectinesterase inhibitor 13. The pectinesterase 13 stretch occupies residues 301 to 598 (NATVAKDGSG…YTVGPFLQGD (298 aa)). Substrate-binding residues include Thr376 and Gln406. The active-site Proton donor; for pectinesterase activity is the Asp429. Cys443 and Cys463 are oxidised to a cystine. The active-site Nucleophile; for pectinesterase activity is the Asp450. Substrate contacts are provided by Arg518 and Trp520. 2 N-linked (GlcNAc...) asparagine glycosylation sites follow: Asn522 and Asn588.

This sequence in the N-terminal section; belongs to the PMEI family. The protein in the C-terminal section; belongs to the pectinesterase family. As to expression, expressed in flower buds.

The protein resides in the membrane. The catalysed reaction is [(1-&gt;4)-alpha-D-galacturonosyl methyl ester](n) + n H2O = [(1-&gt;4)-alpha-D-galacturonosyl](n) + n methanol + n H(+). Its pathway is glycan metabolism; pectin degradation; 2-dehydro-3-deoxy-D-gluconate from pectin: step 1/5. Functionally, acts in the modification of cell walls via demethylesterification of cell wall pectin. This Arabidopsis thaliana (Mouse-ear cress) protein is Probable pectinesterase/pectinesterase inhibitor 13 (PME13).